Reading from the N-terminus, the 231-residue chain is MAKSSRRYKEIAQKIDRDRLYPLTDALALVKEVATAKFDESVDIAINLGIDVRKSDQVVRGAVVLPSGTGKTVRVAVFAQGDKAKEALDAGADIVGLEDLAEQVKANEINFDLAIASPDSMRIVGQLGQILGPRGLMPNPKVGTVTLDVASAVKNAKAGQIQFRADKAGIVHCTVGRASFSVDALRENIIALVDALNKSKPATSKGVYLRKMAISSTMGAGVRVDHAGIIN.

Belongs to the universal ribosomal protein uL1 family. Part of the 50S ribosomal subunit.

Its function is as follows. Binds directly to 23S rRNA. The L1 stalk is quite mobile in the ribosome, and is involved in E site tRNA release. Protein L1 is also a translational repressor protein, it controls the translation of the L11 operon by binding to its mRNA. In Nitrosomonas eutropha (strain DSM 101675 / C91 / Nm57), this protein is Large ribosomal subunit protein uL1.